Consider the following 358-residue polypeptide: DnaJ homolog subfamily B member 11 (358 aa).

The first 22 residues, 1–22 (MAPQNLGTFCLLLLYLIGTVIA), serve as a signal peptide directing secretion. A J domain is found at 25–90 (DFYKILGVPR…EKRKQYDTYG (66 aa)). The residue at position 188 (Thr188) is a Phosphothreonine. Asn261 carries N-linked (GlcNAc...) asparagine glycosylation.

As to quaternary structure, part of a large chaperone multiprotein complex comprising DNAJB11, HSP90B1, HSPA5, HYOU, PDIA2, PDIA4, PDIA6, PPIB, SDF2L1, UGGT1 and very small amounts of ERP29, but not, or at very low levels, CALR nor CANX. Binds to denatured substrates in an ATP-independent manner. Interacts via the J domain with HSPA5 in an ATP-dependent manner. Post-translationally, contains high-mannose Endo H-sensitive carbohydrates. In terms of processing, cys-169, Cys-171, Cys-193 and Cys-196 form intramolecular disulfide bonds. The preferential partner for each Cys is not known.

It is found in the endoplasmic reticulum lumen. In terms of biological role, as a co-chaperone for HSPA5 it is required for proper folding, trafficking or degradation of proteins. Binds directly to both unfolded proteins that are substrates for ERAD and nascent unfolded peptide chains, but dissociates from the HSPA5-unfolded protein complex before folding is completed. May help recruiting HSPA5 and other chaperones to the substrate. Stimulates HSPA5 ATPase activity. It is necessary for maturation and correct trafficking of PKD1. In Bos taurus (Bovine), this protein is DnaJ homolog subfamily B member 11 (DNAJB11).